The sequence spans 34 residues: Stromal 70 kDa heat shock-related protein, chloroplastic (34 aa).

The protein belongs to the heat shock protein 70 family.

It is found in the plastid. Its subcellular location is the chloroplast stroma. Functionally, interacts with newly imported chloroplast proteins to assist in their maturation. This is Stromal 70 kDa heat shock-related protein, chloroplastic from Cucurbita maxima (Pumpkin).